The sequence spans 811 residues: Bifunctional enzyme MurC/Ddl (811 aa).

A UDP-N-acetylmuramate--alanine ligase region spans residues 1 to 450 (MNRKNHYHFI…GNALKDFEPK (450 aa)). ATP is bound by residues 111–117 (GSHGKTT) and 607–662 (LETF…SREI). The interval 451-811 (KLSVGVVCGG…NKQCLLTAKS (361 aa)) is D-alanine--D-alanine ligase. Residues 574–785 (KRLAASVGVP…FEQIVHQLII (212 aa)) enclose the ATP-grasp domain. Mg(2+) is bound by residues aspartate 739, glutamate 752, and asparagine 754.

The protein in the N-terminal section; belongs to the MurCDEF family. This sequence in the C-terminal section; belongs to the D-alanine--D-alanine ligase family. Mg(2+) is required as a cofactor. The cofactor is Mn(2+).

Its subcellular location is the cytoplasm. The catalysed reaction is UDP-N-acetyl-alpha-D-muramate + L-alanine + ATP = UDP-N-acetyl-alpha-D-muramoyl-L-alanine + ADP + phosphate + H(+). It carries out the reaction 2 D-alanine + ATP = D-alanyl-D-alanine + ADP + phosphate + H(+). It participates in cell wall biogenesis; peptidoglycan biosynthesis. This chain is Bifunctional enzyme MurC/Ddl (murC/ddlA), found in Chlamydia caviae (strain ATCC VR-813 / DSM 19441 / 03DC25 / GPIC) (Chlamydophila caviae).